The chain runs to 585 residues: Proline--tRNA ligase (585 aa).

Belongs to the class-II aminoacyl-tRNA synthetase family. ProS type 1 subfamily. In terms of assembly, homodimer.

It localises to the cytoplasm. It catalyses the reaction tRNA(Pro) + L-proline + ATP = L-prolyl-tRNA(Pro) + AMP + diphosphate. Its function is as follows. Catalyzes the attachment of proline to tRNA(Pro) in a two-step reaction: proline is first activated by ATP to form Pro-AMP and then transferred to the acceptor end of tRNA(Pro). As ProRS can inadvertently accommodate and process non-cognate amino acids such as alanine and cysteine, to avoid such errors it has two additional distinct editing activities against alanine. One activity is designated as 'pretransfer' editing and involves the tRNA(Pro)-independent hydrolysis of activated Ala-AMP. The other activity is designated 'posttransfer' editing and involves deacylation of mischarged Ala-tRNA(Pro). The misacylated Cys-tRNA(Pro) is not edited by ProRS. This chain is Proline--tRNA ligase, found in Nocardia farcinica (strain IFM 10152).